A 427-amino-acid chain; its full sequence is MTLSKSKLLFERAKKVIPGGVNSPVRAFGAVGGYPPFIKKAKGARIYDADGNEYIDYVGSWGPMILGHSHPRVLEAVSKTMVDGLSFGAATELEVQMAELITELVPSVEMVRMVNSGTEAVMSAIRVARGYTKREKIIKFAGCYHGHADSMLVKVGSGAMTNGIPNSGGVTAGAAKDTLIARYNDIDSVKLLFEQNKGNIAAVIVEPVAANMGVVPPKDNFLEELRKLCDKEEALLIFDEVITGFRLAIGGAQQYFGVNADLVTYGKIIGGGMPVGAYGGRREIMECVAPVGDVYQAGTLSGNPIAMSAGIATLRELYENPGIFENINRLGQRLSEGLGKITKYTVKAVGSLVCVFMTEEEVNDYDSAVKSDTGLFGRYFNHLLNNGIYIAPSQFEAMFVSNAHTDKDIDETLEKVSLFFARKSPPA.

Residue lysine 267 is modified to N6-(pyridoxal phosphate)lysine.

This sequence belongs to the class-III pyridoxal-phosphate-dependent aminotransferase family. HemL subfamily. Homodimer. It depends on pyridoxal 5'-phosphate as a cofactor.

It is found in the cytoplasm. It catalyses the reaction (S)-4-amino-5-oxopentanoate = 5-aminolevulinate. Its pathway is porphyrin-containing compound metabolism; protoporphyrin-IX biosynthesis; 5-aminolevulinate from L-glutamyl-tRNA(Glu): step 2/2. In Acetivibrio thermocellus (strain ATCC 27405 / DSM 1237 / JCM 9322 / NBRC 103400 / NCIMB 10682 / NRRL B-4536 / VPI 7372) (Clostridium thermocellum), this protein is Glutamate-1-semialdehyde 2,1-aminomutase.